Reading from the N-terminus, the 444-residue chain is Methylenetetrahydrofolate--tRNA-(uracil-5-)-methyltransferase TrmFO (444 aa).

10 to 15 (GAGLAG) is a binding site for FAD.

This sequence belongs to the MnmG family. TrmFO subfamily. Requires FAD as cofactor.

It is found in the cytoplasm. The enzyme catalyses uridine(54) in tRNA + (6R)-5,10-methylene-5,6,7,8-tetrahydrofolate + NADH + H(+) = 5-methyluridine(54) in tRNA + (6S)-5,6,7,8-tetrahydrofolate + NAD(+). It catalyses the reaction uridine(54) in tRNA + (6R)-5,10-methylene-5,6,7,8-tetrahydrofolate + NADPH + H(+) = 5-methyluridine(54) in tRNA + (6S)-5,6,7,8-tetrahydrofolate + NADP(+). In terms of biological role, catalyzes the folate-dependent formation of 5-methyl-uridine at position 54 (M-5-U54) in all tRNAs. This is Methylenetetrahydrofolate--tRNA-(uracil-5-)-methyltransferase TrmFO from Streptococcus suis (strain 98HAH33).